Reading from the N-terminus, the 362-residue chain is Oxygen-dependent coproporphyrinogen-III oxidase (362 aa).

Residues 12 to 31 form a disordered region; sequence RQENDQSTPQLELPPTDSRD. Ser118 contacts substrate. Residues His122 and His132 each coordinate a divalent metal cation. The Proton donor role is filled by His132. Position 134–136 (134–136) interacts with substrate; sequence NYR. A divalent metal cation-binding residues include His166 and His196. Positions 286–321 are important for dimerization; the sequence is YVEFNLVWDRGTIFGLQTNGRTESILMSLPPLVRWE.

Belongs to the aerobic coproporphyrinogen-III oxidase family. Homodimer. A divalent metal cation serves as cofactor.

The protein resides in the cytoplasm. It carries out the reaction coproporphyrinogen III + O2 + 2 H(+) = protoporphyrinogen IX + 2 CO2 + 2 H2O. Its pathway is porphyrin-containing compound metabolism; protoporphyrin-IX biosynthesis; protoporphyrinogen-IX from coproporphyrinogen-III (O2 route): step 1/1. Its function is as follows. Involved in the heme and chlorophyll biosynthesis. Catalyzes the aerobic oxidative decarboxylation of propionate groups of rings A and B of coproporphyrinogen-III to yield the vinyl groups in protoporphyrinogen-IX. The sequence is that of Oxygen-dependent coproporphyrinogen-III oxidase from Synechococcus sp. (strain CC9902).